A 117-amino-acid polypeptide reads, in one-letter code: Large ribosomal subunit protein bL20 (117 aa).

Belongs to the bacterial ribosomal protein bL20 family.

In terms of biological role, binds directly to 23S ribosomal RNA and is necessary for the in vitro assembly process of the 50S ribosomal subunit. It is not involved in the protein synthesizing functions of that subunit. In Campylobacter jejuni subsp. jejuni serotype O:2 (strain ATCC 700819 / NCTC 11168), this protein is Large ribosomal subunit protein bL20.